The primary structure comprises 1074 residues: Transmembrane protein 132E (1074 aa).

The N-terminal stretch at 1 to 25 is a signal peptide; that stretch reads MAPGMSGRGGAALLCLSALLAHASG. Residues 26 to 893 are Extracellular-facing; sequence RSHPASPSPP…LTDLEIGMYA (868 aa). N70 and N91 each carry an N-linked (GlcNAc...) asparagine glycan. Disordered stretches follow at residues 202–226 and 241–264; these read PPAPAAPPTARRKSPDGLEPEATGE and ASGGCGGSRRGAGPGVGARAESPT. The span at 243–256 shows a compositional bias: gly residues; the sequence is GGCGGSRRGAGPGV. N-linked (GlcNAc...) asparagine glycans are attached at residues N318 and N399. Disordered regions lie at residues 563–585 and 814–867; these read RSVRESEDEDEEEEERRQSASRG and GRDE…VPPT. Residues 841 to 862 are compositionally biased toward low complexity; the sequence is GAGPPGSALPAPEAPGPGTASP. Residues 894–914 form a helical membrane-spanning segment; sequence LLGVFCLAILVFLINCIVFVL. Residues 915–1074 are Cytoplasmic-facing; that stretch reads RYRHKRIPPE…NYMRRIKEIA (160 aa). The segment at 946–1063 is disordered; that stretch reads VQGELSPPAG…PTRPTAPPDL (118 aa). Residues 972-984 are compositionally biased toward low complexity; that stretch reads SGSSQTSVQSQVH. Acidic residues predominate over residues 1034-1044; sequence GEEDEEEEEDL.

It belongs to the TMEM132 family.

The protein localises to the membrane. Its function is as follows. Required for normal inner ear hair cell function and hearing. The sequence is that of Transmembrane protein 132E from Homo sapiens (Human).